Here is a 347-residue protein sequence, read N- to C-terminus: S-adenosylmethionine:tRNA ribosyltransferase-isomerase (347 aa).

Belongs to the QueA family. In terms of assembly, monomer.

It is found in the cytoplasm. The catalysed reaction is 7-aminomethyl-7-carbaguanosine(34) in tRNA + S-adenosyl-L-methionine = epoxyqueuosine(34) in tRNA + adenine + L-methionine + 2 H(+). The protein operates within tRNA modification; tRNA-queuosine biosynthesis. Its function is as follows. Transfers and isomerizes the ribose moiety from AdoMet to the 7-aminomethyl group of 7-deazaguanine (preQ1-tRNA) to give epoxyqueuosine (oQ-tRNA). This is S-adenosylmethionine:tRNA ribosyltransferase-isomerase from Bordetella bronchiseptica (strain ATCC BAA-588 / NCTC 13252 / RB50) (Alcaligenes bronchisepticus).